Consider the following 403-residue polypeptide: MVAQKSRLLARAFPYLDIFSVFALTPPPQSFGHTPHRRLRWYLMTGYVFYATAILATVFIVSYFNIIAIDEEVLEYNVSDFTRVMGNIQKSLYSIMAIANHLNMLINYRRLGGIYKDIADLEMDMDEASQCFGGQRQRFSFRFRMALCVGVWMILMVGSMPRLTMTAMGPFVSTLLKILTEFVMIMQQLKSLEYCVFVLIIYELVLRLRRTLSQLQEEFQDCEQQDMLQALCVALKRNQLLLGRIWRLEGDVGSYFTPTMLLLFLYNGLTILHMVNWAYINKFLYDSCCQYERFLVCSTLLVNLLLPCLLSQRCINAYNCFPRILHKIRCTSADPNFAMLTRGLREYSLQMEHLKLRFTCGGLFDINLKYFGGLLVTIFGYIIILIQFKVQAIAANRYKKVVN.

Residues 1-11 (MVAQKSRLLAR) lie on the Cytoplasmic side of the membrane. The chain crosses the membrane as a helical span at residues 12 to 32 (AFPYLDIFSVFALTPPPQSFG). Residues 33–48 (HTPHRRLRWYLMTGYV) are Extracellular-facing. The helical transmembrane segment at 49-69 (FYATAILATVFIVSYFNIIAI) threads the bilayer. The Cytoplasmic segment spans residues 70–83 (DEEVLEYNVSDFTR). The chain crosses the membrane as a helical span at residues 84–104 (VMGNIQKSLYSIMAIANHLNM). Topologically, residues 105 to 144 (LINYRRLGGIYKDIADLEMDMDEASQCFGGQRQRFSFRFR) are extracellular. A helical transmembrane segment spans residues 145–165 (MALCVGVWMILMVGSMPRLTM). The Cytoplasmic segment spans residues 166 to 191 (TAMGPFVSTLLKILTEFVMIMQQLKS). A helical transmembrane segment spans residues 192–212 (LEYCVFVLIIYELVLRLRRTL). At 213–259 (SQLQEEFQDCEQQDMLQALCVALKRNQLLLGRIWRLEGDVGSYFTPT) the chain is on the extracellular side. A helical membrane pass occupies residues 260–280 (MLLLFLYNGLTILHMVNWAYI). Over 281–365 (NKFLYDSCCQ…LRFTCGGLFD (85 aa)) the chain is Cytoplasmic. A helical transmembrane segment spans residues 366-386 (INLKYFGGLLVTIFGYIIILI). The Extracellular segment spans residues 387–403 (QFKVQAIAANRYKKVVN).

The protein belongs to the insect chemoreceptor superfamily. Gustatory receptor (GR) family. Gr2a subfamily.

The protein localises to the cell membrane. Probable gustatory receptor which mediates acceptance or avoidance behavior, depending on its substrates. The protein is Putative gustatory receptor 98b (Gr98b) of Drosophila melanogaster (Fruit fly).